Here is a 180-residue protein sequence, read N- to C-terminus: Oligoribonuclease (180 aa).

An Exonuclease domain is found at 7 to 170 (LIWIDLEMTG…DDIRESIAEL (164 aa)). The active site involves Tyr-128.

The protein belongs to the oligoribonuclease family.

Its subcellular location is the cytoplasm. 3'-to-5' exoribonuclease specific for small oligoribonucleotides. This chain is Oligoribonuclease, found in Pseudomonas aeruginosa (strain UCBPP-PA14).